Here is a 457-residue protein sequence, read N- to C-terminus: Aromatic amino acid transport protein AroP (457 aa).

The Cytoplasmic segment spans residues 1–19 (MMEGQQHGEQLKRGLKNRH). A helical membrane pass occupies residues 20 to 40 (IQLIALGGAIGTGLFLGSASV). At 41–42 (IQ) the chain is on the periplasmic side. Residues 43–63 (SAGPGIILGYAIAGFIAFLIM) traverse the membrane as a helical segment. Topologically, residues 64-86 (RQLGEMVVEEPVAGSFSHFAYKY) are cytoplasmic. A helical transmembrane segment spans residues 87–107 (WGSFAGFASGWNYWVLYVLVA). Residues 108 to 117 (MAELTAVGKY) lie on the Periplasmic side of the membrane. The chain crosses the membrane as a helical span at residues 118–138 (IQFWYPEIPTWVSAAVFFVVI). The Cytoplasmic segment spans residues 139-155 (NAINLTNVTVFGEMEFW). Residues 156–176 (FAIIKVIAVVAMIIFGGWLLF) form a helical membrane-spanning segment. At 177-201 (SGNGGPQASVSNLWDQGGFLPHGFT) the chain is on the periplasmic side. The helical transmembrane segment at 202-222 (GLVMMMAIIMFSFGGLELVGI) threads the bilayer. At 223 to 240 (TAAEADNPEQSIPKATNQ) the chain is on the cytoplasmic side. Residues 241–261 (VIYRILIFYIGSLAVLLSLMP) form a helical membrane-spanning segment. Over 262–271 (WTRVTADTSP) the chain is Periplasmic. A helical transmembrane segment spans residues 272 to 292 (FVLIFHELGDTFVANALNIVV). Over 293–333 (LTAALSVYNSCVYCNSRMLFGLAQQGNAPKALASVDKRGVP) the chain is Cytoplasmic. A helical membrane pass occupies residues 334–354 (VNTILVSALVTALCVLINYLA). The Periplasmic segment spans residues 355 to 358 (PESA). A helical transmembrane segment spans residues 359 to 379 (FGLLMALVVSALVINWAMISL). Residues 380–407 (AHMKFRRAKQEQGVVTRFPALLYPLGNW) lie on the Cytoplasmic side of the membrane. Residues 408-428 (ICLLFMAVVLVIMLMTPGMAI) form a helical membrane-spanning segment. A topological domain (periplasmic) is located at residue serine 429. Residues 430–450 (VYLIPVWLVVLGIGYLFKEKT) traverse the membrane as a helical segment. Residues 451–457 (AKAVKAH) are Cytoplasmic-facing.

This sequence belongs to the amino acid-polyamine-organocation (APC) superfamily. Amino acid transporter (AAT) (TC 2.A.3.1) family.

Its subcellular location is the cell inner membrane. It catalyses the reaction L-phenylalanine(in) + H(+)(in) = L-phenylalanine(out) + H(+)(out). It carries out the reaction L-tryptophan(in) + H(+)(in) = L-tryptophan(out) + H(+)(out). The enzyme catalyses L-tyrosine(in) + H(+)(in) = L-tyrosine(out) + H(+)(out). In terms of biological role, permease that is involved in the active transport across the cytoplasmic membrane of all three aromatic amino acids, phenylalanine, tyrosine and tryptophan. In Escherichia coli O157:H7, this protein is Aromatic amino acid transport protein AroP (aroP).